Here is a 132-residue protein sequence, read N- to C-terminus: Small ribosomal subunit protein uS11 (132 aa).

Belongs to the universal ribosomal protein uS11 family. Part of the 30S ribosomal subunit. Interacts with proteins S7 and S18. Binds to IF-3.

Functionally, located on the platform of the 30S subunit, it bridges several disparate RNA helices of the 16S rRNA. Forms part of the Shine-Dalgarno cleft in the 70S ribosome. This Chlamydia caviae (strain ATCC VR-813 / DSM 19441 / 03DC25 / GPIC) (Chlamydophila caviae) protein is Small ribosomal subunit protein uS11.